A 343-amino-acid chain; its full sequence is Probable dual-specificity RNA methyltransferase RlmN (343 aa).

Glutamate 93 serves as the catalytic Proton acceptor. One can recognise a Radical SAM core domain in the interval 99–320; that stretch reads TDDRATLCVS…NAKGVVCTIR (222 aa). An intrachain disulfide couples cysteine 106 to cysteine 331. The [4Fe-4S] cluster site is built by cysteine 113, cysteine 117, and cysteine 120. S-adenosyl-L-methionine contacts are provided by residues 158 to 159, serine 190, 212 to 214, and histidine 288; these read GE and SLH. Residue cysteine 331 is the S-methylcysteine intermediate of the active site.

The protein belongs to the radical SAM superfamily. RlmN family. [4Fe-4S] cluster serves as cofactor.

It is found in the cytoplasm. It catalyses the reaction adenosine(2503) in 23S rRNA + 2 reduced [2Fe-2S]-[ferredoxin] + 2 S-adenosyl-L-methionine = 2-methyladenosine(2503) in 23S rRNA + 5'-deoxyadenosine + L-methionine + 2 oxidized [2Fe-2S]-[ferredoxin] + S-adenosyl-L-homocysteine. It carries out the reaction adenosine(37) in tRNA + 2 reduced [2Fe-2S]-[ferredoxin] + 2 S-adenosyl-L-methionine = 2-methyladenosine(37) in tRNA + 5'-deoxyadenosine + L-methionine + 2 oxidized [2Fe-2S]-[ferredoxin] + S-adenosyl-L-homocysteine. Specifically methylates position 2 of adenine 2503 in 23S rRNA and position 2 of adenine 37 in tRNAs. In Parabacteroides distasonis (strain ATCC 8503 / DSM 20701 / CIP 104284 / JCM 5825 / NCTC 11152), this protein is Probable dual-specificity RNA methyltransferase RlmN.